We begin with the raw amino-acid sequence, 468 residues long: ERO1-like protein alpha (468 aa).

The first 23 residues, 1-23, serve as a signal peptide directing secretion; it reads MGHRWGFLIVFLGAVGLLGSGYG. Intrachain disulfides connect Cys35–Cys48, Cys37–Cys46, Cys85–Cys391, Cys94–Cys99, Cys94–Cys131, Cys99–Cys104, Cys208–Cys241, and Cys394–Cys397. Residues Ser106, Ser143, and Ser145 each carry the phosphoserine modification. FAD is bound by residues Arg187, Thr189, and Trp200. FAD contacts are provided by Ser252 and His255. Asn280 is a glycosylation site (N-linked (GlcNAc...) asparagine). Residues Arg287 and Arg300 each coordinate FAD. Asn384 carries N-linked (GlcNAc...) asparagine glycosylation.

Belongs to the EROs family. Predominantly monomer. May function both as a monomer and a homodimer. Interacts with PDILT. Interacts with ERP44; the interaction results in retention of ERO1A in the endoplasmic reticulum. FAD is required as a cofactor. Post-translationally, the Cys-94/Cys-99 and Cys-394/Cys-397 disulfide bonds constitute the redox-active center. The Cys-94/Cys-99 disulfide bond may accept electron from P4HB and funnel them to the active site disulfide Cys-394/Cys-397. The regulatory Cys-99/Cys-104 disulfide bond stabilizes the other regulatory bond Cys-94/Cys-131. In terms of processing, phosphorylated on Ser-145 by FAM20C in the Golgi which increases its enzymatic activity. Phosphorylation is induced by lactation. It is also induced by hypoxia and reductive stress.

Its subcellular location is the endoplasmic reticulum membrane. It is found in the golgi apparatus lumen. It localises to the secreted. The protein localises to the cell projection. The protein resides in the dendrite. Enzyme activity is tightly regulated to prevent the accumulation of reactive oxygen species in the endoplasmic reticulum. Reversibly down-regulated by the formation of disulfide bonds between the active site Cys-94 and Cys-131, and between Cys-99 and Cys-104. Glutathione may be required to regulate its activity in the endoplasmic reticulum. In terms of biological role, oxidoreductase involved in disulfide bond formation in the endoplasmic reticulum. Efficiently reoxidizes P4HB/PDI, the enzyme catalyzing protein disulfide formation, in order to allow P4HB to sustain additional rounds of disulfide formation. Following P4HB reoxidation, passes its electrons to molecular oxygen via FAD, leading to the production of reactive oxygen species (ROS) in the cell. Required for the proper folding of immunoglobulins. Plays an important role in ER stress-induced, CHOP-dependent apoptosis by activating the inositol 1,4,5-trisphosphate receptor IP3R1. This chain is ERO1-like protein alpha, found in Sus scrofa (Pig).